Consider the following 221-residue polypeptide: UPF0758 protein ECA0145 (221 aa).

The 123-residue stretch at 99–221 folds into the MPN domain; it reads AMLNPEATGQ…FVSFAERGWI (123 aa). 3 residues coordinate Zn(2+): H170, H172, and D183. The short motif at 170–183 is the JAMM motif element; the sequence is HNHPSGKAEPSQAD.

The protein belongs to the UPF0758 family. YicR subfamily.

This is UPF0758 protein ECA0145 from Pectobacterium atrosepticum (strain SCRI 1043 / ATCC BAA-672) (Erwinia carotovora subsp. atroseptica).